The chain runs to 137 residues: Small ribosomal subunit protein uS12 (137 aa).

The interval 1-20 (MPTTNQLVNRGRTSKVQKQN) is disordered. Asp-102 bears the 3-methylthioaspartic acid mark.

This sequence belongs to the universal ribosomal protein uS12 family. As to quaternary structure, part of the 30S ribosomal subunit. Contacts proteins S8 and S17. May interact with IF1 in the 30S initiation complex.

With S4 and S5 plays an important role in translational accuracy. Its function is as follows. Interacts with and stabilizes bases of the 16S rRNA that are involved in tRNA selection in the A site and with the mRNA backbone. Located at the interface of the 30S and 50S subunits, it traverses the body of the 30S subunit contacting proteins on the other side and probably holding the rRNA structure together. The combined cluster of proteins S8, S12 and S17 appears to hold together the shoulder and platform of the 30S subunit. The polypeptide is Small ribosomal subunit protein uS12 (Mycoplasmopsis synoviae (strain 53) (Mycoplasma synoviae)).